The chain runs to 382 residues: Galactokinase (382 aa).

Residue 34–37 (EHTD) participates in substrate binding. 124–130 (GAGLSSS) provides a ligand contact to ATP. Residues S130 and E162 each contribute to the Mg(2+) site. Residue D174 is the Proton acceptor of the active site. A substrate-binding site is contributed by Y223.

Belongs to the GHMP kinase family. GalK subfamily.

It is found in the cytoplasm. The catalysed reaction is alpha-D-galactose + ATP = alpha-D-galactose 1-phosphate + ADP + H(+). It participates in carbohydrate metabolism; galactose metabolism. Its function is as follows. Catalyzes the transfer of the gamma-phosphate of ATP to D-galactose to form alpha-D-galactose-1-phosphate (Gal-1-P). This chain is Galactokinase, found in Shigella flexneri serotype 5b (strain 8401).